A 179-amino-acid polypeptide reads, in one-letter code: Large ribosomal subunit protein uL5 (179 aa).

It belongs to the universal ribosomal protein uL5 family. As to quaternary structure, part of the 50S ribosomal subunit; part of the 5S rRNA/L5/L18/L25 subcomplex. Contacts the 5S rRNA and the P site tRNA. Forms a bridge to the 30S subunit in the 70S ribosome.

Functionally, this is one of the proteins that bind and probably mediate the attachment of the 5S RNA into the large ribosomal subunit, where it forms part of the central protuberance. In the 70S ribosome it contacts protein S13 of the 30S subunit (bridge B1b), connecting the 2 subunits; this bridge is implicated in subunit movement. Contacts the P site tRNA; the 5S rRNA and some of its associated proteins might help stabilize positioning of ribosome-bound tRNAs. The protein is Large ribosomal subunit protein uL5 of Salmonella arizonae (strain ATCC BAA-731 / CDC346-86 / RSK2980).